A 665-amino-acid chain; its full sequence is Protein phosphatase 1 regulatory subunit 21 (665 aa).

Coiled-coil stretches lie at residues 1–84, 125–206, 426–477, and 586–627; these read MTDL…SESK, LEAQ…RKYQ, ESRE…EAQV, and KRLA…EDQL.

Component of the FERRY complex.

The protein localises to the early endosome. Functionally, component of the FERRY complex (Five-subunit Endosomal Rab5 and RNA/ribosome intermediary). The FERRY complex directly interacts with mRNAs and RAB5A, and functions as a RAB5A effector involved in the localization and the distribution of specific mRNAs most likely by mediating their endosomal transport. The complex recruits mRNAs and ribosomes to early endosomes through direct mRNA-interaction. Putative regulator of protein phosphatase 1 (PP1) activity. May play a role in the endosomal sorting process or in endosome maturation pathway. This is Protein phosphatase 1 regulatory subunit 21 (ppp1r21) from Danio rerio (Zebrafish).